The primary structure comprises 119 residues: Odin profilin (119 aa).

The protein belongs to the Asgard profilin family.

It localises to the cytoplasm. Its subcellular location is the cytoskeleton. Inhibition of rabbit actin polymerization is reduced by phosphatidylinositol-(4,5)-P2(1,2-dipalmitoyl), a soluble form of the phospholipid phosphatidylinositol, suggesting an unknown lipid might regulate actin-profilin interaction in vivo. Functionally, binds to actin and affects the structure of the cytoskeleton. At high concentrations inhibits spontaneous rabbit actin nucleation. This strongly suggests this archaea has a profilin-regulated actin system, and actin-type genes can be identified in this organism. This chain is Odin profilin, found in Odinarchaeota yellowstonii (strain LCB_4).